The chain runs to 317 residues: MKI67 FHA domain-interacting nucleolar phosphoprotein (317 aa).

Alanine 2 is subject to N-acetylalanine. A Glycyl lysine isopeptide (Lys-Gly) (interchain with G-Cter in SUMO2) cross-link involves residue lysine 40. Positions 47–125 (GVVYLGHLPS…RLLSCKFMPR (79 aa)) constitute an RRM domain. Residue arginine 116 is modified to Omega-N-methylarginine. Glycyl lysine isopeptide (Lys-Gly) (interchain with G-Cter in SUMO2) cross-links involve residues lysine 181 and lysine 194. A Citrulline modification is found at arginine 203. Residues 203–317 (RDSEGNQVLP…KRPRKRKSKQ (115 aa)) are disordered. Positions 213–233 (DQKEGLSGEPRRKEKMMKEDI) are enriched in basic and acidic residues. Serine 219 bears the Phosphoserine mark. Positions 238–248 (PKKRKRSRRKK) are enriched in basic residues. Serine 253 is modified (phosphoserine). A phosphothreonine mark is found at threonine 257 and threonine 261. The span at 265-284 (LERRKSQVMEVGGDKDDEII) shows a compositional bias: basic and acidic residues. Arginine 267 and arginine 268 each carry omega-N-methylated arginine. Position 270 is a phosphoserine (serine 270). A Glycyl lysine isopeptide (Lys-Gly) (interchain with G-Cter in SUMO1); alternate cross-link involves residue lysine 293. Lysine 293 participates in a covalent cross-link: Glycyl lysine isopeptide (Lys-Gly) (interchain with G-Cter in SUMO2); alternate. A Phosphothreonine modification is found at threonine 301. The segment covering 308-317 (KRPRKRKSKQ) has biased composition (basic residues).

Binds to the FHA domain of MKI67; this interaction is enhanced in mitosis. Phosphorylated. In terms of processing, citrullinated by PADI4. In terms of tissue distribution, expressed in brain, heart, hind limb muscles, intestine, liver, skin and spleen.

Its subcellular location is the nucleus. It localises to the nucleolus. The protein resides in the chromosome. The sequence is that of MKI67 FHA domain-interacting nucleolar phosphoprotein (Nifk) from Mus musculus (Mouse).